We begin with the raw amino-acid sequence, 467 residues long: Ribulose bisphosphate carboxylase large chain (467 aa).

The residue at position 5 (Lys5) is an N6,N6,N6-trimethyllysine. Substrate contacts are provided by Asn114 and Thr164. Lys166 acts as the Proton acceptor in catalysis. Lys168 lines the substrate pocket. Positions 192, 194, and 195 each coordinate Mg(2+). Residue Lys192 is modified to N6-carboxylysine. The active-site Proton acceptor is His285. Substrate contacts are provided by Arg286, His318, and Ser370.

Belongs to the RuBisCO large chain family. Type I subfamily. As to quaternary structure, heterohexadecamer of 8 large chains and 8 small chains; disulfide-linked. The disulfide link is formed within the large subunit homodimers. Mg(2+) serves as cofactor. In terms of processing, the disulfide bond which can form in the large chain dimeric partners within the hexadecamer appears to be associated with oxidative stress and protein turnover.

Its subcellular location is the plastid. The protein localises to the chloroplast. The enzyme catalyses 2 (2R)-3-phosphoglycerate + 2 H(+) = D-ribulose 1,5-bisphosphate + CO2 + H2O. The catalysed reaction is D-ribulose 1,5-bisphosphate + O2 = 2-phosphoglycolate + (2R)-3-phosphoglycerate + 2 H(+). Functionally, ruBisCO catalyzes two reactions: the carboxylation of D-ribulose 1,5-bisphosphate, the primary event in carbon dioxide fixation, as well as the oxidative fragmentation of the pentose substrate in the photorespiration process. Both reactions occur simultaneously and in competition at the same active site. The polypeptide is Ribulose bisphosphate carboxylase large chain (Hydrophyllum virginianum (Eastern waterleaf)).